The chain runs to 284 residues: Homeobox protein SIX1 (284 aa).

Residues 124 to 183 (GEETSYCFKEKSRGVLREWYAHNPYPSPREKRELAEATGLTTTQVSNWFKNRRQRDRAAE) constitute a DNA-binding region (homeobox). A disordered region spans residues 168–269 (VSNWFKNRRQ…LQTHQHQLQD (102 aa)). Basic and acidic residues predominate over residues 179–190 (DRAAEAKERENT). The span at 242-269 (RSSNYSLPGLTASQPSHGLQTHQHQLQD) shows a compositional bias: polar residues.

Belongs to the SIX/Sine oculis homeobox family. Interacts with DACH1. Interacts with EYA1. Interacts with EYA2. Interacts with CDH1. Interacts with TBX18. Interacts with CEBPA. Interacts with CEBPB. Interacts with EBF2. Post-translationally, phosphorylated during interphase; becomes hyperphosphorylated during mitosis. Hyperphosphorylation impairs binding to promoter elements. Ubiquitinated by the anaphase promoting complex (APC), leading to its proteasomal degradation. As to expression, specifically expressed in skeletal muscle.

The protein resides in the nucleus. Its subcellular location is the cytoplasm. In terms of biological role, transcription factor that is involved in the regulation of cell proliferation, apoptosis and embryonic development. Plays an important role in the development of several organs, including kidney, muscle and inner ear. Depending on context, functions as a transcriptional repressor or activator. Lacks an activation domain, and requires interaction with EYA family members for transcription activation. Mediates nuclear translocation of EYA1 and EYA2. Binds the 5'-TCA[AG][AG]TTNC-3' motif present in the MEF3 element in the MYOG promoter and CIDEA enhancer. Regulates the expression of numerous genes, including MYC, CCND1 and EZR. Acts as an activator of the IGFBP5 promoter, probably coactivated by EYA2. Repression of precursor cell proliferation in myoblasts is switched to activation through recruitment of EYA3 to the SIX1-DACH1 complex. During myogenesis, seems to act together with EYA2 and DACH2. Regulates the expression of CCNA1. Promotes brown adipocyte differentiation. The chain is Homeobox protein SIX1 (SIX1) from Homo sapiens (Human).